We begin with the raw amino-acid sequence, 82 residues long: Small ribosomal subunit protein bS18 (82 aa).

The protein belongs to the bacterial ribosomal protein bS18 family. In terms of assembly, part of the 30S ribosomal subunit. Forms a tight heterodimer with protein bS6.

In terms of biological role, binds as a heterodimer with protein bS6 to the central domain of the 16S rRNA, where it helps stabilize the platform of the 30S subunit. This chain is Small ribosomal subunit protein bS18, found in Chlamydia caviae (strain ATCC VR-813 / DSM 19441 / 03DC25 / GPIC) (Chlamydophila caviae).